The following is a 189-amino-acid chain: Thymidylate kinase (189 aa).

Gly7–Ser14 provides a ligand contact to ATP.

This sequence belongs to the thymidylate kinase family.

It catalyses the reaction dTMP + ATP = dTDP + ADP. Its function is as follows. Phosphorylation of dTMP to form dTDP in both de novo and salvage pathways of dTTP synthesis. In Aliarcobacter butzleri (strain RM4018) (Arcobacter butzleri), this protein is Thymidylate kinase.